We begin with the raw amino-acid sequence, 342 residues long: Methylthioribose-1-phosphate isomerase (342 aa).

Residues 44–46 (RGA), R87, and Q194 contribute to the substrate site. The Proton donor role is filled by D235. Residue 245–246 (NK) coordinates substrate.

Belongs to the eIF-2B alpha/beta/delta subunits family. MtnA subfamily.

It carries out the reaction 5-(methylsulfanyl)-alpha-D-ribose 1-phosphate = 5-(methylsulfanyl)-D-ribulose 1-phosphate. The protein operates within amino-acid biosynthesis; L-methionine biosynthesis via salvage pathway; L-methionine from S-methyl-5-thio-alpha-D-ribose 1-phosphate: step 1/6. In terms of biological role, catalyzes the interconversion of methylthioribose-1-phosphate (MTR-1-P) into methylthioribulose-1-phosphate (MTRu-1-P). This chain is Methylthioribose-1-phosphate isomerase, found in Acetivibrio thermocellus (strain ATCC 27405 / DSM 1237 / JCM 9322 / NBRC 103400 / NCIMB 10682 / NRRL B-4536 / VPI 7372) (Clostridium thermocellum).